The chain runs to 291 residues: Phosphatidylglycerol--prolipoprotein diacylglyceryl transferase (291 aa).

Transmembrane regions (helical) follow at residues 24 to 44 (WYAL…RALL), 64 to 84 (FILW…VLFY), 99 to 119 (IWKG…AVIL), and 125 to 145 (GLPI…GLFL). Arg147 serves as a coordination point for a 1,2-diacyl-sn-glycero-3-phospho-(1'-sn-glycerol). The next 3 membrane-spanning stretches (helical) occupy residues 187 to 207 (ATLE…AGAL), 211 to 231 (GLVL…GEFF), and 247 to 267 (MGML…CVAW).

It belongs to the Lgt family.

Its subcellular location is the cell inner membrane. It carries out the reaction L-cysteinyl-[prolipoprotein] + a 1,2-diacyl-sn-glycero-3-phospho-(1'-sn-glycerol) = an S-1,2-diacyl-sn-glyceryl-L-cysteinyl-[prolipoprotein] + sn-glycerol 1-phosphate + H(+). It participates in protein modification; lipoprotein biosynthesis (diacylglyceryl transfer). In terms of biological role, catalyzes the transfer of the diacylglyceryl group from phosphatidylglycerol to the sulfhydryl group of the N-terminal cysteine of a prolipoprotein, the first step in the formation of mature lipoproteins. The sequence is that of Phosphatidylglycerol--prolipoprotein diacylglyceryl transferase from Nitrobacter hamburgensis (strain DSM 10229 / NCIMB 13809 / X14).